We begin with the raw amino-acid sequence, 437 residues long: Adenosylmethionine-8-amino-7-oxononanoate aminotransferase (437 aa).

Trp64 is a binding site for substrate. 124–125 (GS) contributes to the pyridoxal 5'-phosphate binding site. Residue Tyr157 coordinates substrate. Residue Asp254 coordinates pyridoxal 5'-phosphate. Positions 283 and 316 each coordinate substrate. At Lys283 the chain carries N6-(pyridoxal phosphate)lysine. A pyridoxal 5'-phosphate-binding site is contributed by 317–318 (PT). Arg400 serves as a coordination point for substrate.

It belongs to the class-III pyridoxal-phosphate-dependent aminotransferase family. BioA subfamily. As to quaternary structure, homodimer. It depends on pyridoxal 5'-phosphate as a cofactor.

The protein resides in the cytoplasm. The enzyme catalyses (8S)-8-amino-7-oxononanoate + S-adenosyl-L-methionine = S-adenosyl-4-methylsulfanyl-2-oxobutanoate + (7R,8S)-7,8-diammoniononanoate. It functions in the pathway cofactor biosynthesis; biotin biosynthesis; 7,8-diaminononanoate from 8-amino-7-oxononanoate (SAM route): step 1/1. Functionally, catalyzes the transfer of the alpha-amino group from S-adenosyl-L-methionine (SAM) to 7-keto-8-aminopelargonic acid (KAPA) to form 7,8-diaminopelargonic acid (DAPA). It is the only aminotransferase known to utilize SAM as an amino donor. This is Adenosylmethionine-8-amino-7-oxononanoate aminotransferase (bioA) from Mycobacterium tuberculosis (strain CDC 1551 / Oshkosh).